The following is a 447-amino-acid chain: Tubulin beta-2 chain (447 aa).

The GTP site is built by glutamine 11, glutamate 69, serine 138, glycine 142, threonine 143, glycine 144, asparagine 204, and asparagine 226. Glutamate 69 lines the Mg(2+) pocket. The segment at glutamine 426 to valine 447 is disordered. Residues glycine 429 to valine 447 show a composition bias toward acidic residues.

This sequence belongs to the tubulin family. Dimer of alpha and beta chains. A typical microtubule is a hollow water-filled tube with an outer diameter of 25 nm and an inner diameter of 15 nM. Alpha-beta heterodimers associate head-to-tail to form protofilaments running lengthwise along the microtubule wall with the beta-tubulin subunit facing the microtubule plus end conferring a structural polarity. Microtubules usually have 13 protofilaments but different protofilament numbers can be found in some organisms and specialized cells. The cofactor is Mg(2+).

Its subcellular location is the cytoplasm. It localises to the cytoskeleton. In terms of biological role, tubulin is the major constituent of microtubules, a cylinder consisting of laterally associated linear protofilaments composed of alpha- and beta-tubulin heterodimers. Microtubules grow by the addition of GTP-tubulin dimers to the microtubule end, where a stabilizing cap forms. Below the cap, tubulin dimers are in GDP-bound state, owing to GTPase activity of alpha-tubulin. The chain is Tubulin beta-2 chain (TUB2) from Colletotrichum gloeosporioides (Anthracnose fungus).